The sequence spans 481 residues: Aspartyl/glutamyl-tRNA(Asn/Gln) amidotransferase subunit B (481 aa).

The protein belongs to the GatB/GatE family. GatB subfamily. As to quaternary structure, heterotrimer of A, B and C subunits.

It catalyses the reaction L-glutamyl-tRNA(Gln) + L-glutamine + ATP + H2O = L-glutaminyl-tRNA(Gln) + L-glutamate + ADP + phosphate + H(+). It carries out the reaction L-aspartyl-tRNA(Asn) + L-glutamine + ATP + H2O = L-asparaginyl-tRNA(Asn) + L-glutamate + ADP + phosphate + 2 H(+). In terms of biological role, allows the formation of correctly charged Asn-tRNA(Asn) or Gln-tRNA(Gln) through the transamidation of misacylated Asp-tRNA(Asn) or Glu-tRNA(Gln) in organisms which lack either or both of asparaginyl-tRNA or glutaminyl-tRNA synthetases. The reaction takes place in the presence of glutamine and ATP through an activated phospho-Asp-tRNA(Asn) or phospho-Glu-tRNA(Gln). This Pseudomonas syringae pv. syringae (strain B728a) protein is Aspartyl/glutamyl-tRNA(Asn/Gln) amidotransferase subunit B.